A 287-amino-acid polypeptide reads, in one-letter code: NH(3)-dependent NAD(+) synthetase (287 aa).

53-60 contacts ATP; sequence GISGGQDS. A Mg(2+)-binding site is contributed by Asp59. Arg146 is a deamido-NAD(+) binding site. Residue Thr166 coordinates ATP. Glu171 is a Mg(2+) binding site. Positions 179 and 186 each coordinate deamido-NAD(+). The ATP site is built by Lys195 and Thr217. 266-267 is a deamido-NAD(+) binding site; sequence HK.

This sequence belongs to the NAD synthetase family. In terms of assembly, homodimer.

The catalysed reaction is deamido-NAD(+) + NH4(+) + ATP = AMP + diphosphate + NAD(+) + H(+). It participates in cofactor biosynthesis; NAD(+) biosynthesis; NAD(+) from deamido-NAD(+) (ammonia route): step 1/1. Functionally, catalyzes the ATP-dependent amidation of deamido-NAD to form NAD. Uses ammonia as a nitrogen source. The chain is NH(3)-dependent NAD(+) synthetase from Deinococcus radiodurans (strain ATCC 13939 / DSM 20539 / JCM 16871 / CCUG 27074 / LMG 4051 / NBRC 15346 / NCIMB 9279 / VKM B-1422 / R1).